Here is a 251-residue protein sequence, read N- to C-terminus: Imidazole glycerol phosphate synthase subunit HisF (251 aa).

Active-site residues include D10 and D129.

This sequence belongs to the HisA/HisF family. As to quaternary structure, heterodimer of HisH and HisF.

Its subcellular location is the cytoplasm. The catalysed reaction is 5-[(5-phospho-1-deoxy-D-ribulos-1-ylimino)methylamino]-1-(5-phospho-beta-D-ribosyl)imidazole-4-carboxamide + L-glutamine = D-erythro-1-(imidazol-4-yl)glycerol 3-phosphate + 5-amino-1-(5-phospho-beta-D-ribosyl)imidazole-4-carboxamide + L-glutamate + H(+). Its pathway is amino-acid biosynthesis; L-histidine biosynthesis; L-histidine from 5-phospho-alpha-D-ribose 1-diphosphate: step 5/9. Its function is as follows. IGPS catalyzes the conversion of PRFAR and glutamine to IGP, AICAR and glutamate. The HisF subunit catalyzes the cyclization activity that produces IGP and AICAR from PRFAR using the ammonia provided by the HisH subunit. In Cutibacterium acnes (strain DSM 16379 / KPA171202) (Propionibacterium acnes), this protein is Imidazole glycerol phosphate synthase subunit HisF.